We begin with the raw amino-acid sequence, 500 residues long: Probable cytosol aminopeptidase 1 (500 aa).

Mn(2+) contacts are provided by K263 and D268. The active site involves K275. Positions 287, 346, and 348 each coordinate Mn(2+). Residue R350 is part of the active site.

Belongs to the peptidase M17 family. It depends on Mn(2+) as a cofactor.

The protein localises to the cytoplasm. The catalysed reaction is Release of an N-terminal amino acid, Xaa-|-Yaa-, in which Xaa is preferably Leu, but may be other amino acids including Pro although not Arg or Lys, and Yaa may be Pro. Amino acid amides and methyl esters are also readily hydrolyzed, but rates on arylamides are exceedingly low.. It catalyses the reaction Release of an N-terminal amino acid, preferentially leucine, but not glutamic or aspartic acids.. Functionally, presumably involved in the processing and regular turnover of intracellular proteins. Catalyzes the removal of unsubstituted N-terminal amino acids from various peptides. The chain is Probable cytosol aminopeptidase 1 (pepA1) from Shewanella oneidensis (strain ATCC 700550 / JCM 31522 / CIP 106686 / LMG 19005 / NCIMB 14063 / MR-1).